The following is a 634-amino-acid chain: tRNA uridine 5-carboxymethylaminomethyl modification enzyme MnmG (634 aa).

Residue 14–19 (GGGHAG) participates in FAD binding. 279-293 (GPRYCPSIEDKVVRF) contributes to the NAD(+) binding site.

Belongs to the MnmG family. In terms of assembly, homodimer. Heterotetramer of two MnmE and two MnmG subunits. FAD serves as cofactor.

Its subcellular location is the cytoplasm. NAD-binding protein involved in the addition of a carboxymethylaminomethyl (cmnm) group at the wobble position (U34) of certain tRNAs, forming tRNA-cmnm(5)s(2)U34. The chain is tRNA uridine 5-carboxymethylaminomethyl modification enzyme MnmG from Xanthomonas axonopodis pv. citri (strain 306).